A 211-amino-acid chain; its full sequence is Molybdenum cofactor guanylyltransferase (211 aa).

Residues 12–14, Lys-25, Asn-53, Asp-71, and Asp-101 contribute to the GTP site; that span reads LAG. A Mg(2+)-binding site is contributed by Asp-101.

It belongs to the MobA family. As to quaternary structure, monomer. Mg(2+) serves as cofactor.

The protein localises to the cytoplasm. The catalysed reaction is Mo-molybdopterin + GTP + H(+) = Mo-molybdopterin guanine dinucleotide + diphosphate. Transfers a GMP moiety from GTP to Mo-molybdopterin (Mo-MPT) cofactor (Moco or molybdenum cofactor) to form Mo-molybdopterin guanine dinucleotide (Mo-MGD) cofactor. The chain is Molybdenum cofactor guanylyltransferase from Acidovorax ebreus (strain TPSY) (Diaphorobacter sp. (strain TPSY)).